Here is a 579-residue protein sequence, read N- to C-terminus: Vitamin B6 transporter TPN1 (579 aa).

The Cytoplasmic portion of the chain corresponds to 1-98 (MNRDNMDTTK…LHVAGLWLSA (98 aa)). The chain crosses the membrane as a helical span at residues 99 to 119 (TGGLSSMSSFLLGPLLFGLSF). The Extracellular portion of the chain corresponds to 120 to 122 (RES). Residues 123 to 143 (VASSLISVTIGCLIAAYCSIM) traverse the membrane as a helical segment. The Cytoplasmic segment spans residues 144 to 157 (GPQSGCRQMVTARY). Residues 158 to 178 (LFGWWFVKLVALASIIGVMGW) traverse the membrane as a helical segment. Residues 179–198 (SVVNSVVGGEMLAAISNDKV) lie on the Extracellular side of the membrane. A helical transmembrane segment spans residues 199–219 (PLWVGIVIVTVCSFLVAIFGI). The Cytoplasmic portion of the chain corresponds to 220 to 221 (KQ). A helical membrane pass occupies residues 222–242 (VIKVETYLSVPVLTAFLLLYI). The Extracellular segment spans residues 243 to 274 (SSSDKYSFVNAYVSKGNLDSSTRKGNWMSFFS). The helical transmembrane segment at 275-295 (LCYSITATWGSITADYYILFP) threads the bilayer. Topologically, residues 296-302 (EDTPYIQ) are cytoplasmic. A helical transmembrane segment spans residues 303-323 (IFCLTFFGTFLPTCFVGILGL). The Extracellular segment spans residues 324–362 (LLASVAMSYKPWSVEYDSHGMGGLLWAGFQRWNGFGKFC). The helical transmembrane segment at 363-383 (VVVLVFSLVSNNIINTYSAAF) threads the bilayer. At 384 to 394 (SIQLSSVFCAK) the chain is on the cytoplasmic side. Residues 395–415 (IPRWFWSIVCTIICLVCALIG) traverse the membrane as a helical segment. At 416-421 (RNHFST) the chain is on the extracellular side. A helical membrane pass occupies residues 422–442 (ILGNFLPMIGYWISMYFILLF). The Cytoplasmic portion of the chain corresponds to 443 to 519 (EENLVFRRFF…EVLTHGYAAT (77 aa)). The chain crosses the membrane as a helical span at residues 520-540 (FAFIVGVAGVVVGMAQAYWIG). At 541–545 (PIAAK) the chain is on the extracellular side. Residues 546-566 (FGEYGGDVAMWLSMAFSGVVY) form a helical membrane-spanning segment. Topologically, residues 567–579 (PPCRYLELRKFGR) are cytoplasmic.

This sequence belongs to the purine-cytosine permease (2.A.39) family.

The protein localises to the membrane. Thiamine-regulated, high affinity import carrier of pyridoxine, pyridoxal and pyridoxamine. In Saccharomyces cerevisiae (strain ATCC 204508 / S288c) (Baker's yeast), this protein is Vitamin B6 transporter TPN1 (TPN1).